Reading from the N-terminus, the 571-residue chain is Potassium-transporting ATPase potassium-binding subunit (571 aa).

Transmembrane regions (helical) follow at residues 5–25 (GWMQ…PLGG), 64–84 (LAYA…LYAL), 136–156 (GLTH…VALI), 179–199 (LYVL…QGMP), 220–240 (VGPV…GGFF), 254–274 (LSNF…TNVF), 285–305 (WAIL…TYWA), 330–350 (FGIA…CGAV), 375–395 (IIGG…VAIF), 421–441 (MLGI…ATVV), 488–508 (LAIG…AIAG), and 527–547 (GGLF…LTFF).

The protein belongs to the KdpA family. As to quaternary structure, the system is composed of three essential subunits: KdpA, KdpB and KdpC.

It localises to the cell inner membrane. Functionally, part of the high-affinity ATP-driven potassium transport (or Kdp) system, which catalyzes the hydrolysis of ATP coupled with the electrogenic transport of potassium into the cytoplasm. This subunit binds the periplasmic potassium ions and delivers the ions to the membrane domain of KdpB through an intramembrane tunnel. This is Potassium-transporting ATPase potassium-binding subunit from Methylorubrum extorquens (strain PA1) (Methylobacterium extorquens).